A 739-amino-acid polypeptide reads, in one-letter code: MICOS complex subunit Mic60 (739 aa).

The interval 23-63 is disordered; that stretch reads ANNRQFGGSSSGSGGREQGRRQQEEQGQQGDQGYQGYQSLP. A compositionally biased stretch (low complexity) spans 47-61; the sequence is EQGQQGDQGYQGYQS. A helical transmembrane segment spans residues 69–89; it reads AGFGKVVLFVSPLAAVGGVIT. The segment at 154–219 is disordered; sequence VTGLFGGGSG…PAAKPKDNPL (66 aa). Residues 163–198 are compositionally biased toward basic and acidic residues; it reads GDDKSKKSKVEPVKATPAEEKRPSKPSEVSKTEAKP. The segment covering 199–212 has biased composition (low complexity); sequence VSKPAAAAAPAPAA. Residues 283-339 are a coiled coil; that stretch reads TAVATAERAAREAQEKIVACEIALSAAATAQNAKKVEAVRDKIKKLVDHIGNVKDEL.

Belongs to the MICOS complex subunit Mic60 family. In terms of assembly, component of the mitochondrial contact site and cristae organizing system (MICOS) complex. Interacts with the mitochondria-shaping protein Opa1.

It localises to the mitochondrion inner membrane. Component of the MICOS complex, a large protein complex of the mitochondrial inner membrane that plays crucial roles in the maintenance of crista junctions, inner membrane architecture, and formation of contact sites to the outer membrane. This Drosophila melanogaster (Fruit fly) protein is MICOS complex subunit Mic60.